Reading from the N-terminus, the 452-residue chain is Cobyrinate a,c-diamide synthase (452 aa).

The region spanning 248–441 (RVAYALDAAF…LHIHFYQNPA (194 aa)) is the GATase cobBQ-type domain. C330 functions as the Nucleophile in the catalytic mechanism.

It belongs to the CobB/CbiA family. The cofactor is Mg(2+).

It catalyses the reaction cob(II)yrinate + 2 L-glutamine + 2 ATP + 2 H2O = cob(II)yrinate a,c diamide + 2 L-glutamate + 2 ADP + 2 phosphate + 2 H(+). It functions in the pathway cofactor biosynthesis; adenosylcobalamin biosynthesis; cob(II)yrinate a,c-diamide from sirohydrochlorin (anaerobic route): step 10/10. Its function is as follows. Catalyzes the ATP-dependent amidation of the two carboxylate groups at positions a and c of cobyrinate, using either L-glutamine or ammonia as the nitrogen source. In Listeria innocua serovar 6a (strain ATCC BAA-680 / CLIP 11262), this protein is Cobyrinate a,c-diamide synthase.